The chain runs to 359 residues: Glycerol-3-phosphate dehydrogenase [NAD(P)+] (359 aa).

Residues T11, W12, R32, and K107 each coordinate NADPH. Sn-glycerol 3-phosphate contacts are provided by K107 and G138. A142 is an NADPH binding site. Sn-glycerol 3-phosphate is bound by residues K193, D246, S256, R257, and N258. Residue K193 is the Proton acceptor of the active site. NADPH is bound at residue R257. NADPH-binding residues include V281 and E283.

It belongs to the NAD-dependent glycerol-3-phosphate dehydrogenase family.

It is found in the cytoplasm. The catalysed reaction is sn-glycerol 3-phosphate + NAD(+) = dihydroxyacetone phosphate + NADH + H(+). The enzyme catalyses sn-glycerol 3-phosphate + NADP(+) = dihydroxyacetone phosphate + NADPH + H(+). It functions in the pathway membrane lipid metabolism; glycerophospholipid metabolism. In terms of biological role, catalyzes the reduction of the glycolytic intermediate dihydroxyacetone phosphate (DHAP) to sn-glycerol 3-phosphate (G3P), the key precursor for phospholipid synthesis. This is Glycerol-3-phosphate dehydrogenase [NAD(P)+] from Dehalococcoides mccartyi (strain ATCC BAA-2100 / JCM 16839 / KCTC 5957 / BAV1).